A 649-amino-acid polypeptide reads, in one-letter code: MISASRAAAARLVGAAASRGPTAARHKDGWNGLSHEAFRIVSRRDYASEAIKGAVVGIDLGTTNSCVAVMEGKQAKVLENAEGARTTPSVVAFTSDGERLVGMPAKRQAVTNPNNTFYATKRLIGRRYDDPEVQKDIKNVPFKIVRASNGDAWVEAHGKLYSPSQIGAFVLMKMKETAENYLGHTAKNAVITVPAYFNDSQRQATKDAGQISGLNVLRVINEPTAAALAYGLDKSEDKIIAVYDLGGGTFDISILEIQKGVFEVKSTNGDTFLGGEDFDQALLRHIVKEFKRETGVDLTKDNMALQRVREAAEKAKCELSSSVQTDINLPYLTMDASGPKHLNMKLTRAQFEGIVTDLIRRTIAPCQKAMQDAEVSKSDIGEVILVGGMTRMPKVQQTVQDLFGRAPSKAVNPDEAVAIGAAIQGGVLAGDVTDVLLLDVTPLSLGIETLGGVFTNLSTETPLFQPRKVFSTAADGQTQVEIKVCQGEREMAGDNKLLGQFTLIGIPQPLVESLRLKLPFDIDANGIVHVSAKDKGTGREQQIVIQSSGGLSKDDIENMVKNAEKYAEEDRRKKVTTFSVNMAEGIIHDTETKMEEFKDQLPAEEVNFQNEGTLARKDSETGENIRQAASSLQQASLKLFEWHTKRYVG.

The N-terminal 46 residues, 1 to 46 (MISASRAAAARLVGAAASRGPTAARHKDGWNGLSHEAFRIVSRRDY), are a transit peptide targeting the mitochondrion. Positions 1–432 (MISASRAAAA…IQGGVLAGDV (432 aa)) are interaction with NFS1. Residues threonine 63 and asparagine 64 each coordinate ADP. Residues 63–431 (TNSCVAVMEG…AIQGGVLAGD (369 aa)) are nucleotide-binding domain (NBD). Lysine 76 carries the post-translational modification N6-acetyllysine. Threonine 87 is modified (phosphothreonine). An N6-acetyllysine; alternate mark is found at lysine 135 and lysine 138. Lysine 135 and lysine 138 each carry N6-succinyllysine; alternate. Lysine 143 bears the N6-acetyllysine mark. N6-acetyllysine; alternate is present on lysine 206. An N6-succinyllysine; alternate modification is found at lysine 206. Lysine 206 carries the post-translational modification N6-malonyllysine; alternate. N6-acetyllysine occurs at positions 234 and 288. At lysine 300 the chain carries N6-acetyllysine; alternate. Position 300 is an N6-succinyllysine; alternate (lysine 300). Glutamate 313, lysine 316, and serine 320 together coordinate ADP. Lysine 368 is modified (N6-succinyllysine). The ADP site is built by glycine 388 and arginine 391. Residue lysine 394 is modified to N6-succinyllysine. Position 408 is a phosphoserine (serine 408). Residues 432 to 441 (VTDVLLLDVT) are interdomain linker. N6-acetyllysine; alternate is present on residues lysine 565, lysine 598, and lysine 638. Lysine 565, lysine 598, and lysine 638 each carry N6-succinyllysine; alternate.

It belongs to the heat shock protein 70 family. Interacts strongly with the intermediate form of FXN and weakly with its mature form. Interacts with HSCB. Associates with the mitochondrial contact site and cristae organizing system (MICOS) complex, composed of at least MICOS10/MIC10, CHCHD3/MIC19, CHCHD6/MIC25, APOOL/MIC27, IMMT/MIC60, APOO/MIC23/MIC26 and QIL1/MIC13. This complex was also known under the names MINOS or MitOS complex. The MICOS complex associates with mitochondrial outer membrane proteins SAMM50, MTX1, MTX2 and DNAJC11, mitochondrial inner membrane protein TMEM11 and with HSPA9. Interacts with DNLZ, the interaction is required to prevent self-aggregation. Interacts with TESPA1. Interacts with PDPN. Interacts with NFU1, NFS1 and ISCU. Interacts with TP53; the interaction promotes TP53 degradation. Interacts (via SBD domain) with UBXN2A; the interaction with UBXN2A inhibits HSPA9/MOT-2 interaction with and degradation of TP53, thereby promotes TP53 translocation to the nucleus. Interacts with ITPR1 AND VDAC1; this interaction couples ITPR1 to VDAC1. Component of the TIM23 mitochondrial inner membrane pre-sequence translocase complex.

It localises to the mitochondrion. The protein resides in the nucleus. It is found in the nucleolus. The protein localises to the cytoplasm. Its subcellular location is the mitochondrion matrix. It catalyses the reaction ATP + H2O = ADP + phosphate + H(+). Its activity is regulated as follows. The chaperone activity is regulated by ATP-induced allosteric coupling of the nucleotide-binding (NBD) and substrate-binding (SBD) domains. ATP binding in the NBD leads to a conformational change in the NBD, which is transferred through the interdomain linker (IDL) to the substrate-binding domain (SBD). This elicits a reduced substrate affinity and a faster substrate exchange rate. Upon hydrolysis of ATP to ADP, the protein undergoes a conformational change that increases its affinity for substrate proteins. It cycles through repeated phases of ATP hydrolysis and nucleotide exchange, facilitating repeated cycles of substrate binding and release. Functions in collaboration with co-chaperones. Functions with the co-chaperone, DNLZ, to maintain solubility and regulate ATP hydrolysis. Nucleotide exchange factors, GRPEL1 and GRPEL2, accelerate nucleotide exchange. Functionally, mitochondrial chaperone that plays a key role in mitochondrial protein import, folding, and assembly. Plays an essential role in the protein quality control system, the correct folding of proteins, the re-folding of misfolded proteins, and the targeting of proteins for subsequent degradation. These processes are achieved through cycles of ATP binding, ATP hydrolysis, and ADP release, mediated by co-chaperones. In mitochondria, it associates with the TIM (translocase of the inner membrane) protein complex to assist in the import and folding of mitochondrial proteins. Plays an important role in mitochondrial iron-sulfur cluster (ISC) biogenesis, interacts with and stabilizes ISC cluster assembly proteins FXN, NFU1, NFS1 and ISCU. Regulates erythropoiesis via stabilization of ISC assembly. Regulates mitochondrial calcium-dependent apoptosis by coupling two calcium channels, ITPR1 and VDAC1, at the mitochondria-associated endoplasmic reticulum (ER) membrane to facilitate calcium transport from the ER lumen to the mitochondria intermembrane space, providing calcium for the downstream calcium channel MCU, which releases it into the mitochondrial matrix. Although primarily located in the mitochondria, it is also found in other cellular compartments. In the cytosol, it associates with proteins involved in signaling, apoptosis, or senescence. It may play a role in cell cycle regulation via its interaction with and promotion of degradation of TP53. May play a role in the control of cell proliferation and cellular aging. Protects against reactive oxygen species (ROS). Extracellular HSPA9 plays a cytoprotective role by preventing cell lysis following immune attack by the membrane attack complex by disrupting formation of the complex. This is Stress-70 protein, mitochondrial from Canis lupus familiaris (Dog).